The following is a 500-amino-acid chain: Lysine--tRNA ligase (500 aa).

The Mg(2+) site is built by E410 and E417.

The protein belongs to the class-II aminoacyl-tRNA synthetase family. Homodimer. Mg(2+) serves as cofactor.

It localises to the cytoplasm. The enzyme catalyses tRNA(Lys) + L-lysine + ATP = L-lysyl-tRNA(Lys) + AMP + diphosphate. In Shewanella putrefaciens (strain CN-32 / ATCC BAA-453), this protein is Lysine--tRNA ligase.